The following is an 86-amino-acid chain: Small ribosomal subunit protein uS15 (86 aa).

The protein belongs to the universal ribosomal protein uS15 family. As to quaternary structure, part of the 30S ribosomal subunit. Forms a bridge to the 50S subunit in the 70S ribosome, contacting the 23S rRNA.

In terms of biological role, one of the primary rRNA binding proteins, it binds directly to 16S rRNA where it helps nucleate assembly of the platform of the 30S subunit by binding and bridging several RNA helices of the 16S rRNA. Functionally, forms an intersubunit bridge (bridge B4) with the 23S rRNA of the 50S subunit in the ribosome. The chain is Small ribosomal subunit protein uS15 from Vesicomyosocius okutanii subsp. Calyptogena okutanii (strain HA).